The chain runs to 264 residues: Nicotinamide N-methyltransferase (264 aa).

At Arg-18 the chain carries Citrulline; alternate. Residues Tyr-20 and Tyr-25 each contribute to the S-adenosyl-L-methionine site. Residue Lys-39 is modified to N6-acetyllysine. Gly-63, Tyr-69, Asp-85, and Asn-90 together coordinate S-adenosyl-L-methionine. Arg-132 is subject to Citrulline; alternate. Residues 142–143 (DV) and Thr-163 each bind S-adenosyl-L-methionine. Position 181 is a citrulline; alternate (Arg-181). Asp-197 and Ser-213 together coordinate nicotinamide.

The protein belongs to the class I-like SAM-binding methyltransferase superfamily. NNMT/PNMT/TEMT family. In terms of assembly, monomer. Deiminated by PADI1 and PADI2. Predominantly expressed in the liver. A lower expression is seen in the kidney, lung, skeletal muscle, placenta and heart. Not detected in the brain or pancreas.

The protein localises to the cytoplasm. The catalysed reaction is nicotinamide + S-adenosyl-L-methionine = 1-methylnicotinamide + S-adenosyl-L-homocysteine. The protein operates within cofactor metabolism. It functions in the pathway amino-acid degradation. With respect to regulation, inactivated by deimination on Arg-132. Its function is as follows. Catalyzes the N-methylation of nicotinamide using the universal methyl donor S-adenosyl-L-methionine to form N1-methylnicotinamide and S-adenosyl-L-homocysteine, a predominant nicotinamide/vitamin B3 clearance pathway. Plays a central role in regulating cellular methylation potential, by consuming S-adenosyl-L-methionine and limiting its availability for other methyltransferases. Actively mediates genome-wide epigenetic and transcriptional changes through hypomethylation of repressive chromatin marks, such as H3K27me3. In a developmental context, contributes to low levels of the repressive histone marks that characterize pluripotent embryonic stem cell pre-implantation state. Acts as a metabolic regulator primarily on white adipose tissue energy expenditure as well as hepatic gluconeogenesis and cholesterol biosynthesis. In white adipocytes, regulates polyamine flux by consuming S-adenosyl-L-methionine which provides for propylamine group in polyamine biosynthesis, whereas by consuming nicotinamide controls NAD(+) levels through the salvage pathway. Via its product N1-methylnicotinamide regulates protein acetylation in hepatocytes, by repressing the ubiquitination and increasing the stability of SIRT1 deacetylase. Can also N-methylate other pyridines structurally related to nicotinamide and play a role in xenobiotic detoxification. In Homo sapiens (Human), this protein is Nicotinamide N-methyltransferase.